The sequence spans 207 residues: Transcription antitermination protein NusB (207 aa).

Belongs to the NusB family.

Involved in transcription antitermination. Required for transcription of ribosomal RNA (rRNA) genes. Binds specifically to the boxA antiterminator sequence of the ribosomal RNA (rrn) operons. The polypeptide is Transcription antitermination protein NusB (Trichodesmium erythraeum (strain IMS101)).